Consider the following 1166-residue polypeptide: Poly [ADP-ribose] polymerase tankyrase-2 (1166 aa).

4 ANK repeats span residues 23 to 52, 57 to 86, 90 to 119, and 123 to 152; these read PSAR…VNSR, RKST…NVQA, GGLI…DPNA, and WNYT…EPTI. Asparagine 203 carries the post-translational modification (3S)-3-hydroxyasparagine; by HIF1AN. ANK repeat units lie at residues 210–239, 243–272, 276–305, 363–395, 399–428, 432–461, and 463–489; these read RKST…DVHA, GDLV…CVNA, WQFT…DPTL, THET…NTNE, EFLT…KVNA, LGQT…DPNI, and SLQG…SLGH. Histidine 238 carries the post-translational modification (3S)-3-hydroxyhistidine; by HIF1AN. Asparagine 271 carries the post-translational modification (3S)-3-hydroxyasparagine; by HIF1AN. The residue at position 427 (asparagine 427) is a (3S)-3-hydroxyasparagine; by HIF1AN. At asparagine 518 the chain carries (3S)-3-hydroxyasparagine; by HIF1AN. 4 ANK repeats span residues 525-554, 558-587, 591-620, and 624-652; these read RQST…DVHA, GGLV…VVNV, WKFT…DPTK, and DGNT…LLDA. Residues 545–553 are HIF1AN-binding; sequence LLQHGADVH. Histidine 553 carries the post-translational modification (3S)-3-hydroxyhistidine; by HIF1AN. At asparagine 586 the chain carries (3S)-3-hydroxyasparagine; by HIF1AN. (3S)-3-hydroxyasparagine; by HIF1AN is present on residues asparagine 671, asparagine 706, and asparagine 739. 3 ANK repeats span residues 678–707, 711–740, and 744–773; these read RHST…DVNA, GGLI…CVNA, and WAFT…DPTL. Residues 873–936 enclose the SAM domain; it reads GIDFSITQFI…IKGVERLISG (64 aa). The region spanning 959–1164 is the PARP catalytic domain; that stretch reads SPDDKEFQSV…YQIVRPEGMV (206 aa). Positions 1081, 1084, 1089, and 1092 each coordinate Zn(2+).

Belongs to the ARTD/PARP family. As to quaternary structure, oligomerizes and associates with TNKS. Interacts with the cytoplasmic domain of LNPEP/Otase in SLC2A4/GLUT4-vesicles. Binds to the N-terminus of Grb14 and TRF1 with its ankyrin repeat region. Interacts with HIF1AN. Interacts with RNF146; this interaction leads to ubiquitination and proteasomal degradation. Interacts with NUMA1. Post-translationally, ubiquitinated by RNF146 when auto-poly-ADP-ribosylated, leading to its degradation. Deubiquitinated by USP25; leading to stabilization. ADP-ribosylated (-auto). Poly-ADP-ribosylated protein is recognized by RNF146, followed by ubiquitination.

It localises to the cytoplasm. The protein localises to the golgi apparatus membrane. The protein resides in the nucleus. Its subcellular location is the chromosome. It is found in the telomere. The catalysed reaction is NAD(+) + (ADP-D-ribosyl)n-acceptor = nicotinamide + (ADP-D-ribosyl)n+1-acceptor + H(+).. The enzyme catalyses L-aspartyl-[protein] + NAD(+) = 4-O-(ADP-D-ribosyl)-L-aspartyl-[protein] + nicotinamide. It carries out the reaction L-glutamyl-[protein] + NAD(+) = 5-O-(ADP-D-ribosyl)-L-glutamyl-[protein] + nicotinamide. Its function is as follows. Poly-ADP-ribosyltransferase involved in various processes such as Wnt signaling pathway, telomere length and vesicle trafficking. Acts as an activator of the Wnt signaling pathway by mediating poly-ADP-ribosylation of AXIN1 and AXIN2, 2 key components of the beta-catenin destruction complex: poly-ADP-ribosylated target proteins are recognized by RNF146, which mediates their ubiquitination and subsequent degradation. Also mediates poly-ADP-ribosylation of BLZF1 and CASC3, followed by recruitment of RNF146 and subsequent ubiquitination. Mediates poly-ADP-ribosylation of TERF1, thereby contributing to the regulation of telomere length. Stimulates 26S proteasome activity. The chain is Poly [ADP-ribose] polymerase tankyrase-2 from Mus musculus (Mouse).